The sequence spans 397 residues: Multidrug resistance protein MdtH (397 aa).

The next 10 membrane-spanning stretches (helical) occupy residues 11 to 31 (WFLA…MPMI), 71 to 91 (FGAR…FASL), 94 to 114 (AQSG…GCLF), 137 to 157 (LLMM…SWLL), 163 to 183 (YVCL…LLIL), 211 to 231 (LVLI…IFPI), 242 to 262 (AVGW…YPLA), 291 to 311 (FATT…GIVI), 338 to 358 (LGLA…HDYA), and 366 to 386 (LPWL…VNCF).

This sequence belongs to the major facilitator superfamily. DHA1 family. MdtH (TC 2.A.1.2.21) subfamily.

The protein resides in the cell inner membrane. The protein is Multidrug resistance protein MdtH of Aeromonas salmonicida (strain A449).